The sequence spans 486 residues: 23S rRNA (uracil(1939)-C(5))-methyltransferase RlmD (486 aa).

The TRAM domain occupies 14–76; that stretch reads AAQDGSGLPE…NHWEQANLTA (63 aa). [4Fe-4S] cluster contacts are provided by cysteine 89, cysteine 99, cysteine 102, and cysteine 181. S-adenosyl-L-methionine is bound by residues glutamine 289, phenylalanine 318, asparagine 323, glutamate 339, asparagine 374, and aspartate 395. The active-site Nucleophile is the cysteine 442.

This sequence belongs to the class I-like SAM-binding methyltransferase superfamily. RNA M5U methyltransferase family. RlmD subfamily.

It catalyses the reaction uridine(1939) in 23S rRNA + S-adenosyl-L-methionine = 5-methyluridine(1939) in 23S rRNA + S-adenosyl-L-homocysteine + H(+). Its function is as follows. Catalyzes the formation of 5-methyl-uridine at position 1939 (m5U1939) in 23S rRNA. This chain is 23S rRNA (uracil(1939)-C(5))-methyltransferase RlmD, found in Verminephrobacter eiseniae (strain EF01-2).